The following is a 179-amino-acid chain: Signal peptidase complex subunit 2 (179 aa).

At 1-48 (MSGNNVQEEDSTFHVSNLYSETEIKKITQDFISEKIREQNFEEIVKYS) the chain is on the cytoplasmic side. Residues 49–69 (NIRIFLSLVLIVIGTYCSIFV) traverse the membrane as a helical segment. Residues 70–74 (QYKKN) lie on the Extracellular side of the membrane. Residues 75–95 (PVIMIQLLVAFFVVSTTLIIF) traverse the membrane as a helical segment. Over 96–179 (EYFFFDDVFM…AHGRTLKLKN (84 aa)) the chain is Cytoplasmic.

This sequence belongs to the SPCS2 family. Component of the signal peptidase complex (SPC) composed of a catalytic subunit SEC11/SPC21 and three accessory subunits SPC25, SPC3/SPC22, SPC1/SPC12. The complex induces a local thinning of the ER membrane which is used to measure the length of the signal peptide (SP) h-region of protein substrates. This ensures the selectivity of the complex towards h-regions shorter than 18-20 amino acids. Within the complex, interacts with SEC11/SPC21. Component of a complex composed of SPC25 and PMV; the interaction is mediated via the transmembrane domains. The complex interacts with the SEC61 channel-forming translocon complex and is involved in the recognition and import of PEXEL motif-containing proteins into the ER for subsequent export.

It is found in the endoplasmic reticulum membrane. Functionally, component of the signal peptidase complex (SPC) which catalyzes the cleavage of N-terminal signal sequences from nascent proteins as they are translocated into the lumen of the endoplasmic reticulum. Enhances the enzymatic activity of SPC and facilitates the interactions between different components of the translocation site. Also, regulatory component of the CSP25-plasmepsin PMV complex which cleaves the pentameric localization motif RxLxE/Q/D (termed Plasmodium export element (PEXEL)) located downstream of the N-terminal secretory signal sequence of several proteins. The sequence is that of Signal peptidase complex subunit 2 from Plasmodium falciparum (isolate 3D7).